Consider the following 325-residue polypeptide: Thiamine-monophosphate kinase (325 aa).

Residues Asp30, Ser45, Thr46, and Asp47 each contribute to the Mg(2+) site. His54 lines the substrate pocket. Asp75 and Asp122 together coordinate Mg(2+). ATP contacts are provided by residues 121–122 and Arg146; that span reads GD. Position 212 (Asp212) interacts with Mg(2+). Ser214 lines the ATP pocket. Mg(2+) is bound at residue Asp215. Residues Glu263 and Tyr319 each coordinate substrate.

This sequence belongs to the thiamine-monophosphate kinase family.

The catalysed reaction is thiamine phosphate + ATP = thiamine diphosphate + ADP. The protein operates within cofactor biosynthesis; thiamine diphosphate biosynthesis; thiamine diphosphate from thiamine phosphate: step 1/1. Functionally, catalyzes the ATP-dependent phosphorylation of thiamine-monophosphate (TMP) to form thiamine-pyrophosphate (TPP), the active form of vitamin B1. This chain is Thiamine-monophosphate kinase (thiL), found in Salmonella typhimurium (strain LT2 / SGSC1412 / ATCC 700720).